Consider the following 624-residue polypeptide: Phosphomethylpyrimidine synthase (624 aa).

Residues Asn231, Met260, Tyr289, His325, 345–347, 386–389, and Glu425 each bind substrate; these read SRG and DGLR. His429 is a binding site for Zn(2+). Tyr452 contacts substrate. His493 is a Zn(2+) binding site. Cys573, Cys576, and Cys581 together coordinate [4Fe-4S] cluster.

It belongs to the ThiC family. In terms of assembly, homodimer. [4Fe-4S] cluster serves as cofactor.

It catalyses the reaction 5-amino-1-(5-phospho-beta-D-ribosyl)imidazole + S-adenosyl-L-methionine = 4-amino-2-methyl-5-(phosphooxymethyl)pyrimidine + CO + 5'-deoxyadenosine + formate + L-methionine + 3 H(+). It functions in the pathway cofactor biosynthesis; thiamine diphosphate biosynthesis. Functionally, catalyzes the synthesis of the hydroxymethylpyrimidine phosphate (HMP-P) moiety of thiamine from aminoimidazole ribotide (AIR) in a radical S-adenosyl-L-methionine (SAM)-dependent reaction. The protein is Phosphomethylpyrimidine synthase of Myxococcus xanthus (strain DK1622).